The chain runs to 218 residues: Ribose-5-phosphate isomerase A (218 aa).

Residues 28–31 (TGST), 81–84 (DGAD), and 94–97 (KGGG) each bind substrate. Glu-103 (proton acceptor) is an active-site residue. Residue Lys-121 coordinates substrate.

The protein belongs to the ribose 5-phosphate isomerase family. Homodimer.

It catalyses the reaction aldehydo-D-ribose 5-phosphate = D-ribulose 5-phosphate. Its pathway is carbohydrate degradation; pentose phosphate pathway; D-ribose 5-phosphate from D-ribulose 5-phosphate (non-oxidative stage): step 1/1. Catalyzes the reversible conversion of ribose-5-phosphate to ribulose 5-phosphate. In Proteus mirabilis (strain HI4320), this protein is Ribose-5-phosphate isomerase A.